The primary structure comprises 278 residues: Ras-related protein Rab-40B (278 aa).

GTP-binding residues include serine 23, glycine 26, and lysine 27. A switch-I region spans residues 41–49 (SPYGHPAGI). Aspartate 69 is a Mg(2+) binding site. Glycine 72, asparagine 126, and arginine 127 together coordinate GTP. A switch-II region spans residues 72-88 (GQGRFCTIFRSYSRGAQ). An SOCS box domain is found at 175 to 228 (LLRHGMDRLWRPSKVLSLQELCCRAVVSCTPGHLVDKLPLPVALRSHLKSFSMA). Residues 245–278 (ANSSHKRNSFRKVRTIRPPQSPPRNCARNSCKIS) form a disordered region. The span at 248–259 (SHKRNSFRKVRT) shows a compositional bias: basic residues. A lipid anchor (S-palmitoyl cysteine) is attached at cysteine 270. Cysteine 275 carries the S-geranylgeranyl cysteine lipid modification.

It belongs to the small GTPase superfamily. Rab family. Component of the cullin-5-RING E3 ubiquitin-protein ligase complex (ECS(RAB40B) complex) composed of CUL5, Elongin BC (ELOB and ELOC), RNF7/RBX2 and RAB40B; RAB40B interaction with ECS complex is GTP-independent. Binds (GTP-bound) LIMA1; interaction promotes LIMA1 subcellular localization in lamellipodia during cell migration. Interacts (GTP-bound) with TKS5/SH3PXD2A (via PX domain); interaction promotes invadopodia-mediated extracellular matrix degradation. It depends on Mg(2+) as a cofactor.

The protein resides in the cell membrane. It is found in the cytoplasm. The protein localises to the cytosol. Its subcellular location is the cell projection. It localises to the lamellipodium membrane. The protein resides in the ruffle. It carries out the reaction GTP + H2O = GDP + phosphate + H(+). The protein operates within protein modification; protein ubiquitination. With respect to regulation, regulated by guanine nucleotide exchange factors (GEFs) which promote the exchange of bound GDP for free GTP. Regulated by GTPase activating proteins (GAPs) which increase the GTP hydrolysis activity. Inhibited by GDP dissociation inhibitors (GDIs). RAB40B small GTPase acts as substrate-recognition components of the ECS(RAB40B) E3 ubiquitin ligase complex which mediates the ubiquitination of target proteins. The Rab40 subfamily belongs to the Rab family that are key regulators of intracellular membrane trafficking, from the formation of transport vesicles to their fusion with membranes. Rabs cycle between an inactive GDP-bound form and an active GTP-bound form that is able to recruit to membranes different sets of downstream effectors directly responsible for vesicle formation, movement, tethering and fusion. As part of the ECS(RAB40B) complex, GTP-bound RAB40B promotes LIMA1/EPLIN ubiquitination and degradation, thereby regulating leading-edge actin dynamics during cell migration. As part of the ECS(RAB40B) complex, GTP-bound RAB40B also ubiquitinates RAP2A GTPase which promotes its localization to lamellipodia and activation to drive cell migration. The ECS(RAB40B) complex does not mediate canonical ubiquitin-dependent degradation of RAP2. RAB40B also binds TKS5/SH3PXD2A effector independently from ECS complex to promote invadopodia-mediated extracellular matrix degradation. The chain is Ras-related protein Rab-40B from Mus musculus (Mouse).